A 132-amino-acid polypeptide reads, in one-letter code: Small ribosomal subunit protein uS8 (132 aa).

This sequence belongs to the universal ribosomal protein uS8 family. In terms of assembly, part of the 30S ribosomal subunit. Contacts proteins S5 and S12.

Its function is as follows. One of the primary rRNA binding proteins, it binds directly to 16S rRNA central domain where it helps coordinate assembly of the platform of the 30S subunit. The polypeptide is Small ribosomal subunit protein uS8 (Beijerinckia indica subsp. indica (strain ATCC 9039 / DSM 1715 / NCIMB 8712)).